The primary structure comprises 173 residues: Gamma-crystallin S-2 (173 aa).

2 consecutive Beta/gamma crystallin 'Greek key' domains span residues G2–S40 and D41–T83. Residues H84–P88 are connecting peptide. Beta/gamma crystallin 'Greek key' domains lie at Y89 to G129 and A130 to M172.

Belongs to the beta/gamma-crystallin family.

Functionally, crystallins are the dominant structural components of the vertebrate eye lens. The polypeptide is Gamma-crystallin S-2 (GS-2) (Chiloscyllium indicum (Slender bamboo shark)).